The primary structure comprises 237 residues: MAMFRSLVASAQQRQPPAGPAGGDSGLEAQFSCPICLEVYHRPVAIGSCGHTFCGECLQPCLQVPSPLCPLCRLPFDPKKVDKATHVEKQLSSYKAPCRGCNKKVTLAKMRAHISSCLKVQEQMANCPKFVPVVPTSQPIPSNIPNRSTFACPYCGARNLDQQELVKHCVESHRSDPNRVVCPICSAMPWGDPSYKSANFLQHLLHRHKFSYDTFVDYSIDEEAAFQAALALSLSEN.

The RING-type zinc-finger motif lies at 33 to 73 (CPICLEVYHRPVAIGSCGHTFCGECLQPCLQVPSPLCPLCR). Residues C98, C101, H113, and C117 each contribute to the Zn(2+) site. The C2HC RNF-type zinc finger occupies 98-117 (CRGCNKKVTLAKMRAHISSC). The UIM domain maps to 221 to 237 (DEEAAFQAALALSLSEN).

It localises to the cytoplasm. It carries out the reaction S-ubiquitinyl-[E2 ubiquitin-conjugating enzyme]-L-cysteine + [acceptor protein]-L-lysine = [E2 ubiquitin-conjugating enzyme]-L-cysteine + N(6)-ubiquitinyl-[acceptor protein]-L-lysine.. It functions in the pathway protein modification; protein ubiquitination. In terms of biological role, E3 ubiquitin-protein ligase that promotes the ubiquitination of different substrates. In turn, participates in different biological processes including interferon production or autophagy. Plays a role in the activation of RNA virus-induced interferon-beta production by promoting the ubiquitination of TRAF3 and TRAF6. Also plays a role in the early recruitment of autophagy adapters to bacteria. Mediates 'Lys-29' and 'Lys-33'-linked ubiquitination of SQSTM1 leading to xenophagic targeting of bacteria and inhibition of their replication. This chain is E3 ubiquitin-protein ligase RNF166 (Rnf166), found in Mus musculus (Mouse).